Consider the following 965-residue polypeptide: Calsyntenin-2 (965 aa).

A signal peptide spans M1–G20. Topologically, residues G21 to S835 are extracellular. 2 consecutive Cadherin domains span residues I46 to F162 and K163 to F282. N-linked (GlcNAc...) asparagine glycans are attached at residues N58 and N100. N-linked (GlcNAc...) asparagine glycosylation is found at N344, N376, N720, and N733. A helical membrane pass occupies residues I836 to V856. Residues Y857–K965 are Cytoplasmic-facing. Residues P891 to K965 form a disordered region. Over residues M892–E902 the composition is skewed to basic and acidic residues. A compositionally biased stretch (acidic residues) spans D903–E915. Residues Q942 to G959 show a composition bias toward polar residues.

The protein belongs to the calsyntenin family. Proteolytically processed under normal cellular conditions. A primary zeta-cleavage generates a large extracellular (soluble) N-terminal domain (sAlc) and a short C-terminal transmembrane fragment (CTF1). A secondary cleavage catalyzed by gamma-secretase within the transmembrane domain releases the beta-Alc-gamma chain in the extracellular milieu and produces an intracellular fragment (AlcICD). This processing is strongly suppressed in the tripartite complex formed with APBA2 and APP, which seems to prevent the association with PSEN1.

Its subcellular location is the postsynaptic cell membrane. The protein localises to the endoplasmic reticulum membrane. It is found in the golgi apparatus membrane. It localises to the cell projection. The protein resides in the dendrite. In terms of biological role, postsynaptic adhesion molecule that binds to presynaptic neurexins to mediate synapse formation, and which is involved in learning and memory. Promotes synapse development by acting as a cell adhesion molecule at the postsynaptic membrane, which associates with neurexin-alpha at the presynaptic membrane. This chain is Calsyntenin-2, found in Rattus norvegicus (Rat).